A 306-amino-acid chain; its full sequence is Curved DNA-binding protein (306 aa).

One can recognise a J domain in the interval 5-69 (DYYAIMGVKP…QRRAEYDQMW (65 aa)).

Its subcellular location is the cytoplasm. It localises to the nucleoid. Its function is as follows. DNA-binding protein that preferentially recognizes a curved DNA sequence. It is probably a functional analog of DnaJ; displays overlapping activities with DnaJ, but functions under different conditions, probably acting as a molecular chaperone in an adaptive response to environmental stresses other than heat shock. Lacks autonomous chaperone activity; binds native substrates and targets them for recognition by DnaK. Its activity is inhibited by the binding of CbpM. The protein is Curved DNA-binding protein of Shigella boydii serotype 18 (strain CDC 3083-94 / BS512).